Reading from the N-terminus, the 1062-residue chain is Isoleucine--tRNA ligase (1062 aa).

The short motif at 47-57 (PYTTGHIHLGT) is the 'HIGH' region element. Residues 591–595 (KMSKS) carry the 'KMSKS' region motif. Lys594 lines the ATP pocket.

This sequence belongs to the class-I aminoacyl-tRNA synthetase family. IleS type 2 subfamily. In terms of assembly, monomer. Zn(2+) serves as cofactor.

The protein resides in the cytoplasm. It catalyses the reaction tRNA(Ile) + L-isoleucine + ATP = L-isoleucyl-tRNA(Ile) + AMP + diphosphate. Functionally, catalyzes the attachment of isoleucine to tRNA(Ile). As IleRS can inadvertently accommodate and process structurally similar amino acids such as valine, to avoid such errors it has two additional distinct tRNA(Ile)-dependent editing activities. One activity is designated as 'pretransfer' editing and involves the hydrolysis of activated Val-AMP. The other activity is designated 'posttransfer' editing and involves deacylation of mischarged Val-tRNA(Ile). This Methanospirillum hungatei JF-1 (strain ATCC 27890 / DSM 864 / NBRC 100397 / JF-1) protein is Isoleucine--tRNA ligase.